Reading from the N-terminus, the 317-residue chain is Tenomodulin (317 aa).

Topologically, residues 1–30 are cytoplasmic; it reads MAKNPPENCEGCHILNAEALKSKKIRKSLK. A helical; Signal-anchor for type II membrane protein transmembrane segment spans residues 31–50; the sequence is ICGLVFGILALTLIVLFWGS. The Extracellular portion of the chain corresponds to 51–317; sequence KHFWPEVSKK…WWVARMLGRV (267 aa). The 94-residue stretch at 93 to 186 folds into the BRICHOS domain; that stretch reads GNGTDETLEV…ICDNVTMYWI (94 aa). The N-linked (GlcNAc...) asparagine glycan is linked to Asn-94. Cys-120 and Cys-178 form a disulfide bridge. N-linked (GlcNAc...) asparagine glycosylation is present at Asn-180. Ser-239 carries the post-translational modification Phosphoserine.

This sequence belongs to the chondromodulin-1 family. As to expression, highly expressed in tendons.

The protein localises to the membrane. It is found in the nucleus envelope. Its function is as follows. May be an angiogenesis inhibitor. The polypeptide is Tenomodulin (Tnmd) (Rattus norvegicus (Rat)).